Consider the following 609-residue polypeptide: Pescadillo homolog (609 aa).

Residues 320–413 enclose the BRCT domain; that stretch reads KLKNLFKGLK…KLLPTNKYFI (94 aa). Disordered stretches follow at residues 443 to 462 and 488 to 609; these read DEFE…DEDF and ALNS…EILA. Composition is skewed to basic and acidic residues over residues 444–453 and 488–498; these read EFEKQERAEG and ALNSGEAKKEQ. Positions 481–509 form a coiled coil; it reads FREEKAEALNSGEAKKEQAEEDNEDDDQE. The segment covering 499–512 has biased composition (acidic residues); that stretch reads AEEDNEDDDQEPDQ. Composition is skewed to basic and acidic residues over residues 513–524 and 533–552; these read DETKKQRSEKKQ and VFKE…EALR. Positions 539–607 form a coiled coil; that stretch reads KEQKQLTKQE…QKRKAQRKEI (69 aa). The segment covering 554–564 has biased composition (basic residues); that stretch reads KMVKSRHKKLY. The segment covering 567 to 609 has biased composition (basic and acidic residues); it reads LLDKQKKATKEANLLREKRQQIDKQKRKEQTQKRKAQRKEILA.

The protein belongs to the pescadillo family.

The protein localises to the nucleus. The protein resides in the nucleolus. Its subcellular location is the nucleoplasm. In terms of biological role, required for maturation of ribosomal RNAs and formation of the large ribosomal subunit. This Aedes aegypti (Yellowfever mosquito) protein is Pescadillo homolog.